Here is a 233-residue protein sequence, read N- to C-terminus: Protein-L-isoaspartate O-methyltransferase (233 aa).

Residue S83 is part of the active site.

This sequence belongs to the methyltransferase superfamily. L-isoaspartyl/D-aspartyl protein methyltransferase family.

It is found in the cytoplasm. The catalysed reaction is [protein]-L-isoaspartate + S-adenosyl-L-methionine = [protein]-L-isoaspartate alpha-methyl ester + S-adenosyl-L-homocysteine. Catalyzes the methyl esterification of L-isoaspartyl residues in peptides and proteins that result from spontaneous decomposition of normal L-aspartyl and L-asparaginyl residues. It plays a role in the repair and/or degradation of damaged proteins. The protein is Protein-L-isoaspartate O-methyltransferase of Opitutus terrae (strain DSM 11246 / JCM 15787 / PB90-1).